The chain runs to 744 residues: Dual specificity protein kinase shkD (744 aa).

The interval 1–276 (MKRFFSNLFK…SGPPEILPEE (276 aa)) is disordered. Low complexity-rich tracts occupy residues 25 to 70 (PTTS…NSNQ), 79 to 107 (SPST…SFTP), and 127 to 200 (TSTT…QTAS). A compositionally biased stretch (polar residues) spans 201 to 210 (VNHTSSDQSL). Over residues 211 to 236 (NAQNVTQTNNNNNNNNNNNNNNNANN) the composition is skewed to low complexity. In terms of domain architecture, Protein kinase spans 277–534 (IDRTDFLGQG…EILFRLNEIL (258 aa)). ATP-binding positions include 283-291 (LGQGSFGSV) and K304. The Proton acceptor role is filled by D400. The 94-residue stretch at 641-734 (WFHGDIVREQ…LVPCPKFTQE (94 aa)) folds into the SH2 domain.

This sequence belongs to the protein kinase superfamily. Ser/Thr protein kinase family. SH2 domain-containing protein kinase subfamily.

The protein resides in the membrane. It catalyses the reaction L-seryl-[protein] + ATP = O-phospho-L-seryl-[protein] + ADP + H(+). The enzyme catalyses L-threonyl-[protein] + ATP = O-phospho-L-threonyl-[protein] + ADP + H(+). Required for proper chemotaxis and phagocytosis; proper spatiotemporal control of F-actin levels in chemotaxing cells. Negative regulator of the PI3K (phosphatidylinositol 3 kinase) pathway. Predominantly phosphorylates serines and threonines and tyrosines at a lower level. This chain is Dual specificity protein kinase shkD (shkD), found in Dictyostelium discoideum (Social amoeba).